The primary structure comprises 337 residues: UDP-3-O-acylglucosamine N-acyltransferase 2 (337 aa).

Histidine 238 functions as the Proton acceptor in the catalytic mechanism.

This sequence belongs to the transferase hexapeptide repeat family. LpxD subfamily. In terms of assembly, homotrimer.

The catalysed reaction is a UDP-3-O-[(3R)-3-hydroxyacyl]-alpha-D-glucosamine + a (3R)-hydroxyacyl-[ACP] = a UDP-2-N,3-O-bis[(3R)-3-hydroxyacyl]-alpha-D-glucosamine + holo-[ACP] + H(+). It functions in the pathway bacterial outer membrane biogenesis; LPS lipid A biosynthesis. Functionally, catalyzes the N-acylation of UDP-3-O-acylglucosamine using 3-hydroxyacyl-ACP as the acyl donor. Is involved in the biosynthesis of lipid A, a phosphorylated glycolipid that anchors the lipopolysaccharide to the outer membrane of the cell. This Francisella tularensis subsp. tularensis (strain FSC 198) protein is UDP-3-O-acylglucosamine N-acyltransferase 2.